Consider the following 460-residue polypeptide: NADH-ubiquinone oxidoreductase chain 4 (460 aa).

13 helical membrane-spanning segments follow: residues 22 to 42 (WLWP…LSWL), 61 to 81 (PLST…ILAS), 97 to 114 (YISL…AFSA), 118 to 140 (IMFY…RWGN), 149 to 169 (TYFL…LLLL), 196 to 216 (IWWT…GVHL), 226 to 246 (PIAG…YGMM), 259 to 279 (LSYP…SICM), 286 to 305 (SLIA…GILI), 309 to 331 (WGFT…LFCL), 352 to 372 (MALP…LALP), 395 to 415 (IALT…MFLM), and 437 to 457 (LLIA…ELIW).

Belongs to the complex I subunit 4 family.

It is found in the mitochondrion membrane. It catalyses the reaction a ubiquinone + NADH + 5 H(+)(in) = a ubiquinol + NAD(+) + 4 H(+)(out). Core subunit of the mitochondrial membrane respiratory chain NADH dehydrogenase (Complex I) that is believed to belong to the minimal assembly required for catalysis. Complex I functions in the transfer of electrons from NADH to the respiratory chain. The immediate electron acceptor for the enzyme is believed to be ubiquinone. This is NADH-ubiquinone oxidoreductase chain 4 (MT-ND4) from Tetraodon nigroviridis (Spotted green pufferfish).